The sequence spans 436 residues: Trigger factor (436 aa).

In terms of domain architecture, PPIase FKBP-type spans 161 to 246 (GDQLNIDFVG…VNSVSAPQLP (86 aa)).

The protein belongs to the FKBP-type PPIase family. Tig subfamily.

The protein resides in the cytoplasm. The enzyme catalyses [protein]-peptidylproline (omega=180) = [protein]-peptidylproline (omega=0). Functionally, involved in protein export. Acts as a chaperone by maintaining the newly synthesized protein in an open conformation. Functions as a peptidyl-prolyl cis-trans isomerase. The chain is Trigger factor from Ectopseudomonas mendocina (strain ymp) (Pseudomonas mendocina).